A 758-amino-acid chain; its full sequence is 3-isopropylmalate dehydratase (758 aa).

Residues cysteine 359, cysteine 420, and cysteine 423 each coordinate [4Fe-4S] cluster. 2 positions are modified to phosphoserine: serine 486 and serine 488.

Belongs to the aconitase/IPM isomerase family. It depends on [4Fe-4S] cluster as a cofactor.

It carries out the reaction (2R,3S)-3-isopropylmalate = (2S)-2-isopropylmalate. It functions in the pathway amino-acid biosynthesis; L-leucine biosynthesis; L-leucine from 3-methyl-2-oxobutanoate: step 2/4. In terms of biological role, catalyzes the isomerization between 2-isopropylmalate and 3-isopropylmalate, via the formation of 2-isopropylmaleate. The protein is 3-isopropylmalate dehydratase (leu2) of Schizosaccharomyces pombe (strain 972 / ATCC 24843) (Fission yeast).